The chain runs to 2262 residues: Klarsicht protein (2262 aa).

Disordered stretches follow at residues 1–140 (MEMQ…VGND), 345–410 (QQQQ…GEGN), 442–475 (AANG…LNEV), 514–561 (QSQS…PDIG), 800–832 (ATSS…DKEN), 859–898 (SNYD…QLQM), 1000–1031 (HLPP…VSPV), 1115–1157 (PSCK…SEGF), 1246–1316 (SGLA…ELGG), and 1533–1670 (VRRK…QQSR). A required for apical microtubules localization region spans residues 1 to 1774 (MEMQQENETG…KPTPELLDTE (1774 aa)). Over 1–2215 (MEMQQENETG…KRGWAWRIAR (2215 aa)) the chain is Cytoplasmic. The span at 58-67 (KIEHTTKPLK) shows a compositional bias: basic and acidic residues. The segment covering 131-140 (NYGTNSVGND) has biased composition (polar residues). The segment covering 345-402 (QQQQLSSQQPASLTSNCSSESTSESATKSSSLSSGFASDPVTTPIGTAAAAPPSSSTH) has biased composition (low complexity). Residues 446 to 475 (LDDDEDEEEDTEDDSFGYEGEATEDDLNEV) are compositionally biased toward acidic residues. The segment covering 514–525 (QSQSRSQQVPSQ) has biased composition (low complexity). Residues 546–560 (EADEELEEEDEDPDI) are compositionally biased toward acidic residues. 2 stretches are compositionally biased toward low complexity: residues 809–818 (STAVSSTTAT) and 859–881 (SNYD…SNSN). The segment covering 882-894 (GRLTETSATSRVT) has biased composition (polar residues). Low complexity predominate over residues 1006 to 1018 (PAKSAKSTKSQAS). The span at 1019–1028 (NATVSGSTLV) shows a compositional bias: polar residues. The segment covering 1246–1259 (SGLASHSISESALD) has biased composition (polar residues). Low complexity predominate over residues 1267–1280 (PRAASSSGTGSNAA). Basic residues predominate over residues 1288-1299 (SLRRRKARKKRI). Residues 1550 to 1559 (QSDQQQQQLQ) show a composition bias toward low complexity. Positions 1560–1583 (VTPSLSASATALMTTPKNQSTSHQ) are enriched in polar residues. Basic and acidic residues-rich tracts occupy residues 1586 to 1596 (HRAESVGRKLD) and 1610 to 1640 (RTSE…EKCI). Positions 1809-1842 (LTKQERRLQSALEEQEQQQESEQLKQQKLVEEEK) form a coiled coil. Positions 2092–2205 (HQQKQQIQQN…GEGADPAQTS (114 aa)) are disordered. Over residues 2093–2105 (QQKQQIQQNQTQQ) the composition is skewed to low complexity. The segment covering 2130–2142 (RRGKGARKARQAK) has biased composition (basic residues). Residues 2207 to 2262 (RGWAWRIARAAVPMQVALFTIFCAACLMQPNCCDNLNNLSMSFTPQLRYIRGPPPI) enclose the KASH domain. The chain crosses the membrane as a helical; Anchor for type IV membrane protein span at residues 2216–2236 (AAVPMQVALFTIFCAACLMQP). Over 2237 to 2262 (NCCDNLNNLSMSFTPQLRYIRGPPPI) the chain is Perinuclear space.

This sequence belongs to the nesprin family. As to quaternary structure, core component of LINC complexes which are composed of inner nuclear membrane SUN domain-containing proteins coupled to outer nuclear membrane KASH domain-containing nesprins. Interacts with kud. Interacts with Msp300; this interaction allows the anchoring of Msp300 nuclear ring structure to the nuclear envelope. Expressed ubiquitously in the eye disk, but at much higher levels posterior to the morphogenetic furrow. Expressed in R-cells and also in non-neural cone cells.

The protein resides in the cytoplasm. Its subcellular location is the cytoskeleton. It localises to the microtubule organizing center. The protein localises to the perinuclear region. It is found in the nucleus membrane. The protein resides in the nucleus envelope. Component of the LINC (LInker of Nucleoskeleton and Cytoskeleton) complex involved in the connection between the nuclear lamina and the cytoskeleton. Plays a role in the nuclear positioning and links the nucleus to the microtubule organizing center (MTOC). Collaborates with Klar to promote even spacing of the myonuclei at the periphery of striated muscle fibers by mediating a tight association between a nuclear ring structure of Msp300 and the plus ends of a unique astral microtubule (MT) network. The protein is Klarsicht protein of Drosophila melanogaster (Fruit fly).